A 365-amino-acid polypeptide reads, in one-letter code: Outer capsid protein sigma-3 (365 aa).

Residues 51–73 (CMHCLGVVGSLQRKLKHLPHHKC) form a CCHC-type zinc finger.

Belongs to the orthoreovirus sigma-3 protein family. Heterohexamer of three sigma-3 and three Mu-1 proteins. The RNA-binding form is probably a homodimer. In terms of processing, cleaved during virus the endosomal proteolytic disassembly of the outer capsid.

The protein localises to the virion. The protein resides in the host cytoplasm. It is found in the host nucleus. Its function is as follows. Stimulates translation by blocking the activation of the dsRNA-dependent protein kinase EIF2AK2/PKR, thereby inhibiting the host interferon response. Sigma3 prevents the activation of EIF2AK2 by competing with the kinase for dsRNA-binding. In terms of biological role, the viral outer shell polypeptides, of which sigma-3 is one, impose structural constraints that prevent elongation of nascent transcripts by the RNA-dependent RNA polymerase lambda-3. This is Outer capsid protein sigma-3 (S4) from Mammalia (T2J).